We begin with the raw amino-acid sequence, 325 residues long: Helicase VP6-A (325 aa).

2 disordered regions span residues 1 to 127 and 174 to 230; these read MLLA…NGRR and EGVA…EPAR. Composition is skewed to basic and acidic residues over residues 8-18, 32-54, 61-79, and 92-105; these read VIKRSSEELKQ, EGGK…KDGE, GQKE…DRRI, and PGER…RGDG. ATP is bound at residue K106. The segment covering 106–122 has biased composition (gly residues); that stretch reads KVGGGGGDADAGVGATG. The span at 175 to 229 shows a compositional bias: basic and acidic residues; that stretch reads GVAEQTERSRDLRRKEKNGTHAKAVERGGRKQRKESHGDAQREGVEEEKTSEEPA.

This sequence belongs to the orbivirus VP6 family. In terms of assembly, homohexamer.

It localises to the virion. The enzyme catalyses ATP + H2O = ADP + phosphate + H(+). Its function is as follows. ATP dependent RNA helicase essential for RNA packaging and viral transcription. Possesses ss- and dsRNA-binding capacity. The chain is Helicase VP6-A (Segment-9) from Bluetongue virus 13 (isolate USA) (BTV 13).